Consider the following 256-residue polypeptide: Major prion protein (256 aa).

Positions 1–24 are cleaved as a signal peptide; that stretch reads MVKSHIGSWILVLFVAMWSDVGLC. The interaction with GRB2, ERI3 and SYN1 stretch occupies residues 25 to 233; the sequence is KKRPKPGGGW…ESQAYYQRGA (209 aa). The interval 28 to 110 is disordered; that stretch reads PKPGGGWNTG…QWNKPSKPKT (83 aa). 5 repeat units span residues 54–62, 63–70, 71–78, 79–86, and 87–95. The tract at residues 54–95 is 5 X 8 AA tandem repeats of P-H-G-G-G-W-G-Q; sequence PQGGGGWGQPHGGGWGQPHGGGWGQPHGGGWGQPHGGGGWGQ. Positions 55 to 97 are enriched in gly residues; it reads QGGGGWGQPHGGGWGQPHGGGWGQPHGGGWGQPHGGGGWGQGG. Cu(2+) is bound by residues His-64, Gly-65, Gly-66, His-72, Gly-73, Gly-74, His-80, Gly-81, Gly-82, His-88, Gly-90, and Gly-91. Cys-182 and Cys-217 form a disulfide bridge. Residues Asn-184 and Asn-200 are each glycosylated (N-linked (GlcNAc...) asparagine). Residue Ala-233 is the site of GPI-anchor amidated alanine attachment. Positions 234 to 256 are cleaved as a propeptide — removed in mature form; the sequence is SVILFSSPPVILLISFLIFLIVG.

Belongs to the prion family. As to quaternary structure, monomer and homodimer. Has a tendency to aggregate into amyloid fibrils containing a cross-beta spine, formed by a steric zipper of superposed beta-strands. Soluble oligomers may represent an intermediate stage on the path to fibril formation. Copper binding may promote oligomerization. Interacts with GRB2, APP, ERI3/PRNPIP and SYN1. Mislocalized cytosolically exposed PrP interacts with MGRN1; this interaction alters MGRN1 subcellular location and causes lysosomal enlargement. Interacts with KIAA1191.

Its subcellular location is the cell membrane. It localises to the golgi apparatus. In terms of biological role, its primary physiological function is unclear. Has cytoprotective activity against internal or environmental stresses. May play a role in neuronal development and synaptic plasticity. May be required for neuronal myelin sheath maintenance. May play a role in iron uptake and iron homeostasis. Soluble oligomers are toxic to cultured neuroblastoma cells and induce apoptosis (in vitro). Association with GPC1 (via its heparan sulfate chains) targets PRNP to lipid rafts. Also provides Cu(2+) or Zn(2+) for the ascorbate-mediated GPC1 deaminase degradation of its heparan sulfate side chains. The protein is Major prion protein (PRNP) of Ovis canadensis (Bighorn sheep).